A 393-amino-acid chain; its full sequence is S-adenosylmethionine synthase 4 (393 aa).

E9 contacts Mg(2+). H15 is a binding site for ATP. Residue E43 coordinates K(+). Positions 56 and 99 each coordinate L-methionine. Residues 167–169 (DGK), 235–238 (SGRF), D246, 252–253 (RK), A269, K273, and K277 each bind ATP. D246 contacts L-methionine. Position 277 (K277) interacts with L-methionine.

It belongs to the AdoMet synthase family. As to quaternary structure, homotetramer. It depends on Mn(2+) as a cofactor. Requires Mg(2+) as cofactor. Co(2+) is required as a cofactor. K(+) serves as cofactor.

It localises to the cytoplasm. The enzyme catalyses L-methionine + ATP + H2O = S-adenosyl-L-methionine + phosphate + diphosphate. It functions in the pathway amino-acid biosynthesis; S-adenosyl-L-methionine biosynthesis; S-adenosyl-L-methionine from L-methionine: step 1/1. Its function is as follows. Catalyzes the formation of S-adenosylmethionine from methionine and ATP. The reaction comprises two steps that are both catalyzed by the same enzyme: formation of S-adenosylmethionine (AdoMet) and triphosphate, and subsequent hydrolysis of the triphosphate. This is S-adenosylmethionine synthase 4 (METK4) from Vitis vinifera (Grape).